The primary structure comprises 27 residues: Caerulein precursor fragment R4 (27 aa).

As to expression, expressed by the skin glands.

The protein resides in the secreted. Functionally, antimicrobial peptide. The protein is Caerulein precursor fragment R4 of Xenopus ruwenzoriensis (Uganda clawed frog).